The primary structure comprises 354 residues: Nicotinate-nucleotide--dimethylbenzimidazole phosphoribosyltransferase (354 aa).

The Proton acceptor role is filled by E319.

It belongs to the CobT family.

The catalysed reaction is 5,6-dimethylbenzimidazole + nicotinate beta-D-ribonucleotide = alpha-ribazole 5'-phosphate + nicotinate + H(+). Its pathway is nucleoside biosynthesis; alpha-ribazole biosynthesis; alpha-ribazole from 5,6-dimethylbenzimidazole: step 1/2. Catalyzes the synthesis of alpha-ribazole-5'-phosphate from nicotinate mononucleotide (NAMN) and 5,6-dimethylbenzimidazole (DMB). The protein is Nicotinate-nucleotide--dimethylbenzimidazole phosphoribosyltransferase of Chlorobium chlorochromatii (strain CaD3).